Here is an 82-residue protein sequence, read N- to C-terminus: Small ribosomal subunit protein uS17 (82 aa).

The protein belongs to the universal ribosomal protein uS17 family. As to quaternary structure, part of the 30S ribosomal subunit.

Functionally, one of the primary rRNA binding proteins, it binds specifically to the 5'-end of 16S ribosomal RNA. In Shewanella sp. (strain MR-7), this protein is Small ribosomal subunit protein uS17.